The primary structure comprises 92 residues: Long neurotoxin 73 (92 aa).

The N-terminal stretch at 1 to 21 (MKTLLLTLVVVTIVCLDLGDS) is a signal peptide. 5 cysteine pairs are disulfide-bonded: Cys24/Cys41, Cys34/Cys62, Cys47/Cys51, Cys66/Cys77, and Cys78/Cys83.

Belongs to the three-finger toxin family. Long-chain subfamily. Type II alpha-neurotoxin sub-subfamily. Expressed by the venom gland.

The protein localises to the secreted. In terms of biological role, binds with high affinity to muscular (alpha-1/CHRNA1) and neuronal (alpha-7/CHRNA7) nicotinic acetylcholine receptor (nAChR) and inhibits acetylcholine from binding to the receptor, thereby impairing neuromuscular and neuronal transmission. This chain is Long neurotoxin 73, found in Drysdalia coronoides (White-lipped snake).